A 107-amino-acid chain; its full sequence is Probable monothiol glutaredoxin 2 (107 aa).

Residues phenylalanine 7–arginine 107 form the Glutaredoxin domain. Lysine 24 serves as a coordination point for glutathione. Cysteine 32 contacts [2Fe-2S] cluster. Residues arginine 61, phenylalanine 73, and cysteine 86 to aspartate 87 contribute to the glutathione site.

Belongs to the glutaredoxin family. Monothiol subfamily.

This chain is Probable monothiol glutaredoxin 2 (grxC2), found in Rickettsia conorii (strain ATCC VR-613 / Malish 7).